Here is a 27-residue protein sequence, read N- to C-terminus: Cationic protein C1 (27 aa).

The protein resides in the secreted. It localises to the nematocyst. This chain is Cationic protein C1, found in Bunodosoma caissarum (Sea anemone).